The sequence spans 433 residues: Xylose isomerase (433 aa).

Residues His99 and Asp102 contribute to the active site. Mg(2+) is bound by residues Glu230, Glu266, His269, Asp294, Asp305, Asp307, and Asp337.

It belongs to the xylose isomerase family. In terms of assembly, homotetramer. Mg(2+) is required as a cofactor.

It is found in the cytoplasm. The catalysed reaction is alpha-D-xylose = alpha-D-xylulofuranose. This chain is Xylose isomerase, found in Cereibacter sphaeroides (strain ATCC 17029 / ATH 2.4.9) (Rhodobacter sphaeroides).